A 508-amino-acid polypeptide reads, in one-letter code: Probable polyol transporter 3 (508 aa).

The next 12 helical transmembrane spans lie at 21 to 41 (FAFGCAIVASIISIIFGYDTG), 60 to 80 (QIEVLAGILNLCALVGSLTAG), 90 to 110 (YTIALSAVIFLVGSVLMGYGP), 120 to 140 (CIAGVGVGFALMIAPVYSAEI), 147 to 167 (GFLTSLPELCISLGILLGYVS), 178 to 198 (LGWRLMLGIAAFPSLILAFGI), 280 to 300 (ILIAAVGIHFFEHATGIEAVV), 318 to 338 (LLLATVGVGLTKAFFIIIATF), 348 to 368 (LLLTSTGGMVFALTSLAVSLT), 384 to 404 (IVSTYAFVAFFSIGLGPITWV), 418 to 438 (GASIGVAVNRIMNATVSMSFL), and 448 to 468 (GVFFVFAGIAVAAWWFFFFML).

It belongs to the major facilitator superfamily. Sugar transporter (TC 2.A.1.1) family.

It is found in the membrane. Functionally, plasma membrane sugar-proton symporter. The protein is Probable polyol transporter 3 (PLT3) of Arabidopsis thaliana (Mouse-ear cress).